We begin with the raw amino-acid sequence, 687 residues long: Putative mitochondrial carnitine O-acetyltransferase (687 aa).

His346 functions as the Proton acceptor in the catalytic mechanism. 446–459 contributes to the CoA binding site; that stretch reads GASHIKTVFKCSPD. (R)-carnitine-binding residues include Tyr481 and Thr494. A Phosphoserine modification is found at Ser517.

The protein belongs to the carnitine/choline acetyltransferase family.

Its subcellular location is the mitochondrion inner membrane. It carries out the reaction (R)-carnitine + acetyl-CoA = O-acetyl-(R)-carnitine + CoA. Involved in the transfer of acetyl-CoA into mitochondria. May also be involved in the metabolism of acetate and of ethanol. This Saccharomyces cerevisiae (strain ATCC 204508 / S288c) (Baker's yeast) protein is Putative mitochondrial carnitine O-acetyltransferase (YAT1).